The sequence spans 213 residues: KHG/KDPG aldolase (213 aa).

Glu-45 functions as the Proton acceptor in the catalytic mechanism. Residues Arg-49, Thr-73, and Lys-133 each coordinate pyruvate. Lys-133 (schiff-base intermediate with substrate) is an active-site residue.

Belongs to the KHG/KDPG aldolase family. As to quaternary structure, homotrimer.

It localises to the cytoplasm. It carries out the reaction 2-dehydro-3-deoxy-6-phospho-D-gluconate = D-glyceraldehyde 3-phosphate + pyruvate. It catalyses the reaction (4S)-4-hydroxy-2-oxoglutarate = glyoxylate + pyruvate. It participates in carbohydrate acid metabolism; 2-dehydro-3-deoxy-D-gluconate degradation; D-glyceraldehyde 3-phosphate and pyruvate from 2-dehydro-3-deoxy-D-gluconate: step 2/2. Its pathway is carbohydrate metabolism; glyoxylate and dicarboxylate metabolism. Functionally, involved in the degradation of glucose via the Entner-Doudoroff pathway. Catalyzes the reversible, stereospecific retro-aldol cleavage of 2-keto-3-deoxy-6-phosphogluconate (KDPG) to pyruvate and D-glyceraldehyde-3-phosphate. In addition to its KDPG aldolase activity, catalyzes the reversible cleavage of 2-keto-4-hydroxyglutarate (KHG) to glyoxylate and pyruvate. The enzyme is stereoselective for the S-enantiomer of KHG. Cleavage of KHG could serve in tricarboxylic acid (TCA) cycle regulation or, when operating in the reverse direction, in the detoxification of glyoxylate. The sequence is that of KHG/KDPG aldolase (eda) from Escherichia coli O157:H7.